We begin with the raw amino-acid sequence, 306 residues long: UDP-N-acetylenolpyruvoylglucosamine reductase (306 aa).

Positions 34–198 (VGGPADLLIT…LEVTFKLHNS (165 aa)) constitute an FAD-binding PCMH-type domain. The active site involves Arg177. Residue Ser227 is the Proton donor of the active site. Glu297 is a catalytic residue.

The protein belongs to the MurB family. FAD serves as cofactor.

It localises to the cytoplasm. The catalysed reaction is UDP-N-acetyl-alpha-D-muramate + NADP(+) = UDP-N-acetyl-3-O-(1-carboxyvinyl)-alpha-D-glucosamine + NADPH + H(+). It participates in cell wall biogenesis; peptidoglycan biosynthesis. Cell wall formation. The sequence is that of UDP-N-acetylenolpyruvoylglucosamine reductase from Clostridium botulinum (strain Langeland / NCTC 10281 / Type F).